A 240-amino-acid polypeptide reads, in one-letter code: Methylthioribulose-1-phosphate dehydratase (240 aa).

Residue Cys99 coordinates substrate. 2 residues coordinate Zn(2+): His116 and His118. The active-site Proton donor/acceptor is the Glu145. His201 serves as a coordination point for Zn(2+).

This sequence belongs to the aldolase class II family. MtnB subfamily. It depends on Zn(2+) as a cofactor.

It localises to the cytoplasm. The catalysed reaction is 5-(methylsulfanyl)-D-ribulose 1-phosphate = 5-methylsulfanyl-2,3-dioxopentyl phosphate + H2O. The protein operates within amino-acid biosynthesis; L-methionine biosynthesis via salvage pathway; L-methionine from S-methyl-5-thio-alpha-D-ribose 1-phosphate: step 2/6. Catalyzes the dehydration of methylthioribulose-1-phosphate (MTRu-1-P) into 2,3-diketo-5-methylthiopentyl-1-phosphate (DK-MTP-1-P). This Ajellomyces capsulatus (strain G186AR / H82 / ATCC MYA-2454 / RMSCC 2432) (Darling's disease fungus) protein is Methylthioribulose-1-phosphate dehydratase.